The sequence spans 425 residues: Dihydroorotase (425 aa).

2 residues coordinate Zn(2+): His56 and His58. Substrate is bound by residues 58–60 (HYR) and Asn90. Residues Asp148, His175, and His228 each coordinate Zn(2+). Asn274 serves as a coordination point for substrate. Asp301 contributes to the Zn(2+) binding site. Residue Asp301 is part of the active site. Residues His305 and 319-320 (FG) each bind substrate.

This sequence belongs to the metallo-dependent hydrolases superfamily. DHOase family. Class I DHOase subfamily. The cofactor is Zn(2+).

The enzyme catalyses (S)-dihydroorotate + H2O = N-carbamoyl-L-aspartate + H(+). The protein operates within pyrimidine metabolism; UMP biosynthesis via de novo pathway; (S)-dihydroorotate from bicarbonate: step 3/3. Catalyzes the reversible cyclization of carbamoyl aspartate to dihydroorotate. The protein is Dihydroorotase of Lactobacillus acidophilus (strain ATCC 700396 / NCK56 / N2 / NCFM).